The chain runs to 295 residues: Ribosomal RNA small subunit methyltransferase A (295 aa).

N28, L30, G55, E76, D101, and N131 together coordinate S-adenosyl-L-methionine.

It belongs to the class I-like SAM-binding methyltransferase superfamily. rRNA adenine N(6)-methyltransferase family. RsmA subfamily.

The protein localises to the cytoplasm. It catalyses the reaction adenosine(1518)/adenosine(1519) in 16S rRNA + 4 S-adenosyl-L-methionine = N(6)-dimethyladenosine(1518)/N(6)-dimethyladenosine(1519) in 16S rRNA + 4 S-adenosyl-L-homocysteine + 4 H(+). In terms of biological role, specifically dimethylates two adjacent adenosines (A1518 and A1519) in the loop of a conserved hairpin near the 3'-end of 16S rRNA in the 30S particle. May play a critical role in biogenesis of 30S subunits. This Pelotomaculum thermopropionicum (strain DSM 13744 / JCM 10971 / SI) protein is Ribosomal RNA small subunit methyltransferase A.